A 414-amino-acid chain; its full sequence is WD repeat-containing protein jip5 (414 aa).

WD repeat units follow at residues 9-48, 73-112, 118-159, 222-263, and 319-356; these read PLSA…SDTD, RHKG…VENK, AKDG…SPVS, VSSV…DQDE, and DETE…DGMD. Residues 39–65 form a disordered region; that stretch reads RLPSEESDTDGDGAESTSSSRNGKGHI. Residues 352–414 are disordered; that stretch reads SDGMDGDMAG…QDIMGFADID (63 aa). The span at 369–383 shows a compositional bias: acidic residues; sequence DSDDSDDGDDSDDSD.

It belongs to the WD repeat WDR55 family.

The protein localises to the nucleus. It localises to the nucleolus. This is WD repeat-containing protein jip5 (jip5) from Neosartorya fischeri (strain ATCC 1020 / DSM 3700 / CBS 544.65 / FGSC A1164 / JCM 1740 / NRRL 181 / WB 181) (Aspergillus fischerianus).